The following is a 386-amino-acid chain: Methionine aminopeptidase 1 (386 aa).

The residue at position 2 (A2) is an N-acetylalanine. The C6H2-type zinc-finger motif lies at 6–59 (TRVCETDGCSSEAKLQCPTCIKLGIQGSYFCSQECFKGSWATHKLLHKKAKDEK). Residues C9, C14, C22, C25, C36, C40, H48, and H52 each contribute to the Zn(2+) site. Residue H203 coordinates a protein. Zn(2+)-binding residues include D220, D231, and H294. H301 lines the a protein pocket. Positions 327 and 358 each coordinate Zn(2+).

It belongs to the peptidase M24A family. Methionine aminopeptidase type 1 subfamily. As to quaternary structure, associates with the 60S ribosomal subunit of the 80S translational complex. Zn(2+) serves as cofactor. The cofactor is Co(2+). It depends on Mn(2+) as a cofactor. Fe(2+) is required as a cofactor.

It localises to the cytoplasm. The enzyme catalyses Release of N-terminal amino acids, preferentially methionine, from peptides and arylamides.. Cotranslationally removes the N-terminal methionine from nascent proteins. The N-terminal methionine is often cleaved when the second residue in the primary sequence is small and uncharged (Met-Ala-, Cys, Gly, Pro, Ser, Thr, or Val). The sequence is that of Methionine aminopeptidase 1 (METAP1) from Pongo abelii (Sumatran orangutan).